A 560-amino-acid polypeptide reads, in one-letter code: Arginine--tRNA ligase (560 aa).

The 'HIGH' region signature appears at 121–131 (PNIAKPFSMGH).

Belongs to the class-I aminoacyl-tRNA synthetase family. Monomer.

It localises to the cytoplasm. It catalyses the reaction tRNA(Arg) + L-arginine + ATP = L-arginyl-tRNA(Arg) + AMP + diphosphate. The polypeptide is Arginine--tRNA ligase (Exiguobacterium sibiricum (strain DSM 17290 / CCUG 55495 / CIP 109462 / JCM 13490 / 255-15)).